The following is a 316-amino-acid chain: Delta(1)-pyrroline-2-carboxylate reductase (316 aa).

The protein belongs to the ornithine cyclodeaminase/mu-crystallin family. Homodimer.

It carries out the reaction L-proline + NAD(+) = 1-pyrroline-2-carboxylate + NADH + H(+). It catalyses the reaction L-proline + NADP(+) = 1-pyrroline-2-carboxylate + NADPH + H(+). Catalyzes the reduction of Delta(1)-pyrroline-2-carboxylate (Pyr2C) to L-proline, using preferentially NADPH over NADH as the electron donor. Together with LhpH, is involved in a metabolic pathway that converts trans-3-hydroxy-L-proline (t3LHyp) to L-proline. To a much lesser extent, can also reduce Delta(1)-piperideine-2-carboxylate (Pip2C) to L-pipecolate in vitro; however, this activity has likely no physiological significance in vivo since C.psychrerythraea probably possesses no ability to metabolize D-lysine via the L-pipecolate pathway. Does not show ornithine cyclodeaminase (OCD) activity. The chain is Delta(1)-pyrroline-2-carboxylate reductase from Colwellia psychrerythraea (strain 34H / ATCC BAA-681) (Vibrio psychroerythus).